The following is a 497-amino-acid chain: Anthranilate synthase component 1 (497 aa).

L-tryptophan is bound by residues Ser49 and 271–273 (PYL). 312 to 313 (GT) lines the chorismate pocket. Glu339 is a binding site for Mg(2+). Chorismate contacts are provided by residues Arg447, 461-463 (GAG), and Gly463. Glu476 contributes to the Mg(2+) binding site.

The protein belongs to the anthranilate synthase component I family. Heterotetramer consisting of two non-identical subunits: a beta subunit (TrpG) and a large alpha subunit (TrpE). Mg(2+) serves as cofactor.

The enzyme catalyses chorismate + L-glutamine = anthranilate + pyruvate + L-glutamate + H(+). The protein operates within amino-acid biosynthesis; L-tryptophan biosynthesis; L-tryptophan from chorismate: step 1/5. Feedback inhibited by tryptophan. In terms of biological role, part of a heterotetrameric complex that catalyzes the two-step biosynthesis of anthranilate, an intermediate in the biosynthesis of L-tryptophan. In the first step, the glutamine-binding beta subunit (TrpG) of anthranilate synthase (AS) provides the glutamine amidotransferase activity which generates ammonia as a substrate that, along with chorismate, is used in the second step, catalyzed by the large alpha subunit of AS (TrpE) to produce anthranilate. In the absence of TrpG, TrpE can synthesize anthranilate directly from chorismate and high concentrations of ammonia. In Acinetobacter calcoaceticus, this protein is Anthranilate synthase component 1 (trpE).